The following is a 257-amino-acid chain: Phosphate import ATP-binding protein PstB (257 aa).

In terms of domain architecture, ABC transporter spans Ile-11–Ile-252. Gly-43–Ser-50 is a binding site for ATP.

This sequence belongs to the ABC transporter superfamily. Phosphate importer (TC 3.A.1.7) family. As to quaternary structure, the complex is composed of two ATP-binding proteins (PstB), two transmembrane proteins (PstC and PstA) and a solute-binding protein (PstS).

It is found in the cell inner membrane. It catalyses the reaction phosphate(out) + ATP + H2O = ADP + 2 phosphate(in) + H(+). Part of the ABC transporter complex PstSACB involved in phosphate import. Responsible for energy coupling to the transport system. The polypeptide is Phosphate import ATP-binding protein PstB (Salmonella choleraesuis (strain SC-B67)).